Reading from the N-terminus, the 461-residue chain is MYGKIERIHFVGIGGIGMSGIAEVLLNLGYKVSGSDLRGSEITQRLESLGGEIFFGHAAENVANADVVVISSAVHEDNPEVVEAHLRLIPVIPRAEMLAELMRMKYGIAVAGTHGKTTTTSMVATILSKGGIDPTIVIGGRLNSLGTNARLGQGQFLVAEADESDGSFLLLSPTIAVVTNIDADHLDFYSGIEEIKDTFVEFINKIPFYGLAVLCLDNGNVADVLPRVKKRFTSYGLSAQADFRATDVRLSGFSTSFVAHHKGVRLGEITFSMPGAHNVLNALAAIAVAMELDIPFETIQEGFAGFGGVGRRFHLKGEANGIMVVDDYGHHPTEIKATLGAAKAGFAENRLVVVFQPHRYSRTKELFEDFVKAFHDADVLILTDIYPAGEAPIEGVTAEALANRVRRHGQRDVTWISDRDKLCEHLERVLAPGDILLTLGAGNVWQVGETMLLRLKAAKES.

Residue 112 to 118 coordinates ATP; the sequence is GTHGKTT.

Belongs to the MurCDEF family.

It localises to the cytoplasm. It carries out the reaction UDP-N-acetyl-alpha-D-muramate + L-alanine + ATP = UDP-N-acetyl-alpha-D-muramoyl-L-alanine + ADP + phosphate + H(+). It participates in cell wall biogenesis; peptidoglycan biosynthesis. Cell wall formation. This Geobacter sp. (strain M21) protein is UDP-N-acetylmuramate--L-alanine ligase.